The following is a 200-amino-acid chain: MKPYFSCVFVFCFLIKLLTGELNDLANHRMFSFHDGGVQISCNYPETVQQLKMQLFKDREVLCDLTKTKGSGNTVSIKNPMSCPYQLSNNSVSFFLDNADSSQGSYFLCSLSIFDPPPFQEKNLSGGYLLIYESQLCCQLKLWLPVGCAAFVAALLFGCIFIVWFAKKKYRSSVHDPNSEYMFMAAVNTNKKSRLAGMTS.

The N-terminal stretch at 1-20 (MKPYFSCVFVFCFLIKLLTG) is a signal peptide. At 21-145 (ELNDLANHRM…LCCQLKLWLP (125 aa)) the chain is on the extracellular side. The 104-residue stretch at 30–133 (MFSFHDGGVQ…LSGGYLLIYE (104 aa)) folds into the Ig-like V-type domain. 2 disulfides stabilise this stretch: Cys-42-Cys-109 and Cys-63-Cys-83. 2 N-linked (GlcNAc...) asparagine glycosylation sites follow: Asn-89 and Asn-123. The chain crosses the membrane as a helical span at residues 146–166 (VGCAAFVAALLFGCIFIVWFA). The Cytoplasmic portion of the chain corresponds to 167–200 (KKKYRSSVHDPNSEYMFMAAVNTNKKSRLAGMTS).

Homodimer; disulfide-linked. Interacts with ICOSLG. Interacts with PIK3R1. Interacts with TBK1; this interaction is critical for the maturation of T follicular regulatory cells. In terms of processing, N-glycosylated. As to expression, strongly expressed in the spleen and lung. Lower expression seen in liver, kidney and testis.

The protein resides in the cell membrane. Functionally, stimulatory receptor expressed in activated or antigen-experienced T-cells that plays an important role in the immune response. Upon binding to its ligand ICOSL expressed on antigen presenting cells (APCs), delivers costimulatory signals that enhances all basic T-cell responses to a foreign antigen, namely proliferation, secretion of lymphokines including IL10, up-regulation of molecules that mediate cell-cell interaction, and effective help for antibody secretion by B-cells. Also acts as a costimulatory receptor critical for the differentiation of T follicular regulatory cells upon immune challenges such as viral infection. Mechanistically, potentiates TCR-induced calcium flux by augmenting PLCG1 activation and actin remodeling. In addition, activates PI3K signaling pathways independently of calcium flux. Essential both for efficient interaction between T and B-cells and for normal antibody responses to T-cell dependent antigens. Prevents the apoptosis of pre-activated T-cells. Plays a critical role in CD40-mediated class switching of immunoglobin isotypes. In Rattus norvegicus (Rat), this protein is Inducible T-cell costimulator (Icos).